The chain runs to 431 residues: tRNA(Ile)-lysidine synthase (431 aa).

Residue 26-31 (SGGVDS) coordinates ATP.

The protein belongs to the tRNA(Ile)-lysidine synthase family.

It is found in the cytoplasm. The enzyme catalyses cytidine(34) in tRNA(Ile2) + L-lysine + ATP = lysidine(34) in tRNA(Ile2) + AMP + diphosphate + H(+). Ligates lysine onto the cytidine present at position 34 of the AUA codon-specific tRNA(Ile) that contains the anticodon CAU, in an ATP-dependent manner. Cytidine is converted to lysidine, thus changing the amino acid specificity of the tRNA from methionine to isoleucine. The chain is tRNA(Ile)-lysidine synthase from Wolbachia pipientis wMel.